The sequence spans 82 residues: ATP synthase subunit c (82 aa).

2 helical membrane passes run 7 to 27 and 57 to 77; these read AASV…PGIG and FAFM…LLFA.

This sequence belongs to the ATPase C chain family. F-type ATPases have 2 components, F(1) - the catalytic core - and F(0) - the membrane proton channel. F(1) has five subunits: alpha(3), beta(3), gamma(1), delta(1), epsilon(1). F(0) has four main subunits: a(1), b(1), b'(1) and c(10-14). The alpha and beta chains form an alternating ring which encloses part of the gamma chain. F(1) is attached to F(0) by a central stalk formed by the gamma and epsilon chains, while a peripheral stalk is formed by the delta, b and b' chains.

The protein resides in the cellular thylakoid membrane. Its function is as follows. F(1)F(0) ATP synthase produces ATP from ADP in the presence of a proton or sodium gradient. F-type ATPases consist of two structural domains, F(1) containing the extramembraneous catalytic core and F(0) containing the membrane proton channel, linked together by a central stalk and a peripheral stalk. During catalysis, ATP synthesis in the catalytic domain of F(1) is coupled via a rotary mechanism of the central stalk subunits to proton translocation. Functionally, key component of the F(0) channel; it plays a direct role in translocation across the membrane. A homomeric c-ring of between 10-14 subunits forms the central stalk rotor element with the F(1) delta and epsilon subunits. The polypeptide is ATP synthase subunit c (Prochlorococcus marinus (strain NATL1A)).